Reading from the N-terminus, the 290-residue chain is uncharacterized protein (290 aa).

This is an uncharacterized protein from Escherichia phage lambda (Bacteriophage lambda).